The following is a 421-amino-acid chain: Ankyrin repeat domain-containing protein 61 (421 aa).

ANK repeat units follow at residues 27-57, 74-103, 107-146, 166-195, 199-228, 233-272, 276-305, and 309-342; these read TLHS…NQPL, QPIF…DPEV, QGFT…NAVL, NKHS…QVNA, SSMT…NVNC, TGNT…QVNA, EGQT…NVNI, and NGES…PLRL.

The sequence is that of Ankyrin repeat domain-containing protein 61 (Ankrd61) from Mus musculus (Mouse).